Consider the following 486-residue polypeptide: Glutamate--tRNA ligase 1 (486 aa).

The short motif at 9 to 19 (PSPTGMLHIGG) is the 'HIGH' region element. Residues 259–263 (KLSKR) carry the 'KMSKS' region motif. Lys262 provides a ligand contact to ATP.

This sequence belongs to the class-I aminoacyl-tRNA synthetase family. Glutamate--tRNA ligase type 1 subfamily. In terms of assembly, monomer.

It is found in the cytoplasm. The enzyme catalyses tRNA(Glu) + L-glutamate + ATP = L-glutamyl-tRNA(Glu) + AMP + diphosphate. In terms of biological role, catalyzes the attachment of glutamate to tRNA(Glu) in a two-step reaction: glutamate is first activated by ATP to form Glu-AMP and then transferred to the acceptor end of tRNA(Glu). This chain is Glutamate--tRNA ligase 1, found in Hyphomonas neptunium (strain ATCC 15444).